A 158-amino-acid polypeptide reads, in one-letter code: NAD(P)H-quinone oxidoreductase subunit J, chloroplastic (158 aa).

It belongs to the complex I 30 kDa subunit family. NDH is composed of at least 16 different subunits, 5 of which are encoded in the nucleus.

It is found in the plastid. The protein resides in the chloroplast thylakoid membrane. The enzyme catalyses a plastoquinone + NADH + (n+1) H(+)(in) = a plastoquinol + NAD(+) + n H(+)(out). It carries out the reaction a plastoquinone + NADPH + (n+1) H(+)(in) = a plastoquinol + NADP(+) + n H(+)(out). NDH shuttles electrons from NAD(P)H:plastoquinone, via FMN and iron-sulfur (Fe-S) centers, to quinones in the photosynthetic chain and possibly in a chloroplast respiratory chain. The immediate electron acceptor for the enzyme in this species is believed to be plastoquinone. Couples the redox reaction to proton translocation, and thus conserves the redox energy in a proton gradient. In Ceratophyllum demersum (Rigid hornwort), this protein is NAD(P)H-quinone oxidoreductase subunit J, chloroplastic.